The primary structure comprises 453 residues: Probable exopolygalacturonase B (453 aa).

A signal peptide spans 1-16; sequence MKFFALAALFASTVNS. 2 N-linked (GlcNAc...) asparagine glycosylation sites follow: N185 and N225. The Proton donor role is filled by D255. The cysteines at positions 257 and 274 are disulfide-linked. N-linked (GlcNAc...) asparagine glycosylation is found at N263 and N275. The active site involves H278. PbH1 repeat units follow at residues 295-316 and 327-348; these read IENV…RLKA and INNV…VLDQ. N-linked (GlcNAc...) asparagine glycans are attached at residues N302, N329, N354, and N366. One copy of the PbH1 3 repeat lies at 362–405; sequence PSRVNFTNIVFEDIYGTSSGKRGKVVADLTCSPNAVCSGIRLKN. A disulfide bond links C392 and C398. N436 carries N-linked (GlcNAc...) asparagine glycosylation.

It belongs to the glycosyl hydrolase 28 family.

The protein resides in the secreted. The catalysed reaction is [(1-&gt;4)-alpha-D-galacturonosyl](n) + H2O = alpha-D-galacturonate + [(1-&gt;4)-alpha-D-galacturonosyl](n-1). Its function is as follows. Specific in hydrolyzing the terminal glycosidic bond of polygalacturonic acid and oligogalacturonates. The sequence is that of Probable exopolygalacturonase B (pgxB) from Aspergillus fumigatus (strain ATCC MYA-4609 / CBS 101355 / FGSC A1100 / Af293) (Neosartorya fumigata).